The chain runs to 119 residues: Large ribosomal subunit protein uL18 (119 aa).

The segment at M1 to T25 is disordered. Basic residues predominate over residues K9–S20.

This sequence belongs to the universal ribosomal protein uL18 family. In terms of assembly, part of the 50S ribosomal subunit; part of the 5S rRNA/L5/L18/L25 subcomplex. Contacts the 5S and 23S rRNAs.

Functionally, this is one of the proteins that bind and probably mediate the attachment of the 5S RNA into the large ribosomal subunit, where it forms part of the central protuberance. The protein is Large ribosomal subunit protein uL18 of Listeria innocua serovar 6a (strain ATCC BAA-680 / CLIP 11262).